The sequence spans 319 residues: Methionyl-tRNA formyltransferase (319 aa).

Position 112 to 115 (112 to 115 (SLLP)) interacts with (6S)-5,6,7,8-tetrahydrofolate.

The protein belongs to the Fmt family.

It catalyses the reaction L-methionyl-tRNA(fMet) + (6R)-10-formyltetrahydrofolate = N-formyl-L-methionyl-tRNA(fMet) + (6S)-5,6,7,8-tetrahydrofolate + H(+). Functionally, attaches a formyl group to the free amino group of methionyl-tRNA(fMet). The formyl group appears to play a dual role in the initiator identity of N-formylmethionyl-tRNA by promoting its recognition by IF2 and preventing the misappropriation of this tRNA by the elongation apparatus. The protein is Methionyl-tRNA formyltransferase of Pelobacter propionicus (strain DSM 2379 / NBRC 103807 / OttBd1).